The following is a 727-amino-acid chain: C-terminal-binding protein 1 (727 aa).

Residues 5–60 (CGFPNCKFRSRYRGLEDNRHFYRIPKRPLILRQRWLTAIGRTEETVVSQLRICSAH) form a THAP-type zinc finger. Residues 64-158 (GEKKEGDIPV…HPPVLPDPQQ (95 aa)) form a disordered region. Residues 77 to 94 (TVDKQIKIELPPKESKNS) are compositionally biased toward basic and acidic residues. NAD(+) is bound by residues tyrosine 251, 331 to 336 (LGCGRV), aspartate 355, 388 to 394 (CNLGDET), 415 to 417 (TSH), aspartate 441, and 467 to 470 (HSAW). Low complexity predominate over residues 587-613 (ANAQRGSPANRSSRSSPSPHTNKSSVS). 2 disordered regions span residues 587-629 (ANAQ…SPAA) and 652-681 (APNGDSGASTADSGIEGGDKEKVQSDGDEN).

It belongs to the D-isomer specific 2-hydroxyacid dehydrogenase family. Homodimer.

Its function is as follows. Binds DNA and represses gene expression. Plays a role in regulation of life span, possibly by regulating transcription of genes important for lipid metabolism. This chain is C-terminal-binding protein 1, found in Caenorhabditis elegans.